Consider the following 109-residue polypeptide: Large ribosomal subunit protein uL22 (109 aa).

It belongs to the universal ribosomal protein uL22 family. Part of the 50S ribosomal subunit.

In terms of biological role, this protein binds specifically to 23S rRNA; its binding is stimulated by other ribosomal proteins, e.g. L4, L17, and L20. It is important during the early stages of 50S assembly. It makes multiple contacts with different domains of the 23S rRNA in the assembled 50S subunit and ribosome. The globular domain of the protein is located near the polypeptide exit tunnel on the outside of the subunit, while an extended beta-hairpin is found that lines the wall of the exit tunnel in the center of the 70S ribosome. This chain is Large ribosomal subunit protein uL22, found in Cupriavidus necator (strain ATCC 17699 / DSM 428 / KCTC 22496 / NCIMB 10442 / H16 / Stanier 337) (Ralstonia eutropha).